The primary structure comprises 922 residues: Pyruvate dehydrogenase E1 component (922 aa).

Homodimer. Part of an unusual ODH/PDH supercomplex, consisting of AceE (E1), AceF (E2), and Lpd (E3) together with OdhA (E1+E2). Mg(2+) is required as a cofactor. The cofactor is thiamine diphosphate.

The catalysed reaction is N(6)-[(R)-lipoyl]-L-lysyl-[protein] + pyruvate + H(+) = N(6)-[(R)-S(8)-acetyldihydrolipoyl]-L-lysyl-[protein] + CO2. Is a specific component of the pyruvate dehydrogenase (PDH) complex, that catalyzes the overall conversion of pyruvate to acetyl-CoA and CO(2). AceE has reductase activity with pyruvate but does not react with 2-oxoglutarate. The sequence is that of Pyruvate dehydrogenase E1 component (aceE) from Corynebacterium glutamicum (strain ATCC 13032 / DSM 20300 / JCM 1318 / BCRC 11384 / CCUG 27702 / LMG 3730 / NBRC 12168 / NCIMB 10025 / NRRL B-2784 / 534).